A 439-amino-acid polypeptide reads, in one-letter code: Serine--tRNA ligase (439 aa).

242–244 (TAE) contributes to the L-serine binding site. 273-275 (RQE) contributes to the ATP binding site. Glu-296 is a binding site for L-serine. 360-363 (EISS) provides a ligand contact to ATP. Ser-396 is an L-serine binding site.

This sequence belongs to the class-II aminoacyl-tRNA synthetase family. Type-1 seryl-tRNA synthetase subfamily. Homodimer. The tRNA molecule binds across the dimer.

It is found in the cytoplasm. It catalyses the reaction tRNA(Ser) + L-serine + ATP = L-seryl-tRNA(Ser) + AMP + diphosphate + H(+). The enzyme catalyses tRNA(Sec) + L-serine + ATP = L-seryl-tRNA(Sec) + AMP + diphosphate + H(+). Its pathway is aminoacyl-tRNA biosynthesis; selenocysteinyl-tRNA(Sec) biosynthesis; L-seryl-tRNA(Sec) from L-serine and tRNA(Sec): step 1/1. In terms of biological role, catalyzes the attachment of serine to tRNA(Ser). Is also able to aminoacylate tRNA(Sec) with serine, to form the misacylated tRNA L-seryl-tRNA(Sec), which will be further converted into selenocysteinyl-tRNA(Sec). The protein is Serine--tRNA ligase of Oenococcus oeni (strain ATCC BAA-331 / PSU-1).